The primary structure comprises 1093 residues: Mediator of RNA polymerase II transcription subunit 14 (1093 aa).

Disordered regions lie at residues 1-61 (MPGV…KIDG) and 1035-1060 (TKSD…SQAA). The span at 19 to 31 (DTQTPSNGDNLRN) shows a compositional bias: polar residues. Over residues 41–61 (KGDKDHDPDKESYTGKPKIDG) the composition is skewed to basic and acidic residues. Positions 1040 to 1056 (DYSTQPVPEKQSQTGAP) are enriched in polar residues.

It belongs to the Mediator complex subunit 14 family. In terms of assembly, component of the Mediator complex.

The protein localises to the nucleus. In terms of biological role, component of the Mediator complex, a coactivator involved in the regulated transcription of nearly all RNA polymerase II-dependent genes. Mediator functions as a bridge to convey information from gene-specific regulatory proteins to the basal RNA polymerase II transcription machinery. Mediator is recruited to promoters by direct interactions with regulatory proteins and serves as a scaffold for the assembly of a functional preinitiation complex with RNA polymerase II and the general transcription factors. The chain is Mediator of RNA polymerase II transcription subunit 14 (rgr1) from Neosartorya fischeri (strain ATCC 1020 / DSM 3700 / CBS 544.65 / FGSC A1164 / JCM 1740 / NRRL 181 / WB 181) (Aspergillus fischerianus).